The following is a 117-amino-acid chain: Hydrogenase maturation factor HypA (117 aa).

His-2 lines the Ni(2+) pocket. The Zn(2+) site is built by Cys-73, Cys-76, Cys-92, and Cys-95.

This sequence belongs to the HypA/HybF family.

Functionally, involved in the maturation of [NiFe] hydrogenases. Required for nickel insertion into the metal center of the hydrogenase. The protein is Hydrogenase maturation factor HypA of Solidesulfovibrio magneticus (strain ATCC 700980 / DSM 13731 / RS-1) (Desulfovibrio magneticus).